Reading from the N-terminus, the 436-residue chain is 3-ketoacyl-CoA thiolase (436 aa).

Cys99 (acyl-thioester intermediate) is an active-site residue. Active-site proton acceptor residues include His392 and Cys422.

Belongs to the thiolase-like superfamily. Thiolase family. Heterotetramer of two alpha chains (FadJ) and two beta chains (FadI).

The protein localises to the cytoplasm. The enzyme catalyses an acyl-CoA + acetyl-CoA = a 3-oxoacyl-CoA + CoA. It functions in the pathway lipid metabolism; fatty acid beta-oxidation. Its function is as follows. Catalyzes the final step of fatty acid oxidation in which acetyl-CoA is released and the CoA ester of a fatty acid two carbons shorter is formed. This Shigella boydii serotype 18 (strain CDC 3083-94 / BS512) protein is 3-ketoacyl-CoA thiolase.